The chain runs to 116 residues: Ly-6/neurotoxin-like protein 1 (116 aa).

The signal sequence occupies residues 1 to 20 (MTPLLTLILVVLMGLPLAQA). The UPAR/Ly6 domain occupies 21–105 (LDCHVCAYNG…LATPATLALA (85 aa)). 5 cysteine pairs are disulfide-bonded: Cys23-Cys46, Cys26-Cys33, Cys39-Cys64, Cys68-Cys85, and Cys86-Cys91. A lipid anchor (GPI-anchor amidated asparagine) is attached at Asn92. Positions 93–116 (GAGLATPATLALAPILLATLWGLL) are cleaved as a propeptide — removed in mature form.

Interacts with nAChRs containing alpha-4:beta-2 (CHRNA4:CHRNB2) and alpha-7 (CHRNA7) subunits. Interacts with CHRNA4 probably in the endoplasmic reticulum prior to nAChR pentameric assembly. Interacts with KCNA2/Potassium voltage-gated channel subfamily A member 2.

The protein resides in the cell membrane. Its subcellular location is the cell projection. The protein localises to the dendrite. It localises to the endoplasmic reticulum. Its function is as follows. Acts in different tissues through interaction to nicotinic acetylcholine receptors (nAChRs). The proposed role as modulator of nAChR activity seems to be dependent on the nAChR subtype and stoichiometry, and to involve an effect on nAChR trafficking and its cell surface expression, and on single channel properties of the nAChR inserted in the plasma membrane. Modulates functional properties of nicotinic acetylcholine receptors (nAChRs) to prevent excessive excitation, and hence neurodegeneration. Enhances desensitization by increasing both the rate and extent of desensitization of alpha-4:beta-2-containing nAChRs and slowing recovery from desensitization. Promotes large amplitude ACh-evoked currents through alpha-4:beta-2 nAChRs. Is involved in regulation of the nAChR pentameric assembly in the endoplasmic reticulum. Shifts stoichiometry from high sensitivity alpha-4(2):beta-2(3) to low sensitivity alpha-4(3):beta-2(2) nAChR. In vitro modulates alpha-3:beta-4-containing nAChRs. Reduces cell surface expression of (alpha-3:beta-4)(2):beta-4 and (alpha-3:beta-4)(2):alpha-5 nAChRs suggesting an interaction with nAChR alpha-3(-):(+)beta-4 subunit interfaces and an allosteric mode. Corresponding single channel effects characterized by decreased unitary conductance, altered burst proportions and enhanced desensitization/inactivation seem to depend on nAChR alpha:alpha subunit interfaces and are greater in (alpha-3:beta-2)(2):alpha-3 when compared to (alpha-3:beta-2)(2):alpha-5 nAChRs. Prevents plasticity in the primary visual cortex late in life. In Pan troglodytes (Chimpanzee), this protein is Ly-6/neurotoxin-like protein 1.